The following is a 390-amino-acid chain: S-adenosylmethionine synthase 2 (390 aa).

Mg(2+) is bound at residue Glu-9. ATP is bound at residue His-15. Glu-43 contacts K(+). The L-methionine site is built by Glu-56 and Gln-99. ATP-binding positions include 167-169 (DGK), 235-238 (SGRF), Asp-246, 252-253 (RK), Ala-269, Lys-273, and Lys-277. Asp-246 serves as a coordination point for L-methionine. Lys-277 is a binding site for L-methionine.

It belongs to the AdoMet synthase family. As to quaternary structure, homotetramer. Mn(2+) is required as a cofactor. Mg(2+) serves as cofactor. Requires Co(2+) as cofactor. The cofactor is K(+).

Its subcellular location is the cytoplasm. The catalysed reaction is L-methionine + ATP + H2O = S-adenosyl-L-methionine + phosphate + diphosphate. Its pathway is amino-acid biosynthesis; S-adenosyl-L-methionine biosynthesis; S-adenosyl-L-methionine from L-methionine: step 1/1. Its function is as follows. Catalyzes the formation of S-adenosylmethionine from methionine and ATP. The reaction comprises two steps that are both catalyzed by the same enzyme: formation of S-adenosylmethionine (AdoMet) and triphosphate, and subsequent hydrolysis of the triphosphate. The protein is S-adenosylmethionine synthase 2 (SAM2) of Petunia hybrida (Petunia).